The chain runs to 138 residues: Protein transport protein got1 homolog (138 aa).

Residues 1-7 are Cytoplasmic-facing; sequence MFTDQQK. The chain crosses the membrane as a helical span at residues 8-28; it reads IGAMLSAMGLFFGFLGVLLFL. The Lumenal segment spans residues 29 to 30; the sequence is DR. Residues 31–51 traverse the membrane as a helical segment; that stretch reads NLLALGNLLLVSGIVLILGLQ. Residues 52 to 62 are Cytoplasmic-facing; the sequence is KTTKFFAQKKK. A helical transmembrane segment spans residues 63-82; sequence IKGTILFFFGIVVLLVTRWT. Residues 83–87 are Lumenal-facing; the sequence is FVGMV. A helical membrane pass occupies residues 88 to 108; it reads IEIFGFVNLFGDAFPIVISIL. The Cytoplasmic segment spans residues 109 to 138; sequence RKLPIIGNILNHPLVNRLLQKADSGNELPF.

This sequence belongs to the GOT1 family.

It is found in the golgi apparatus membrane. In terms of biological role, may be involved in fusion of ER-derived transport vesicles with the Golgi complex. In Dictyostelium discoideum (Social amoeba), this protein is Protein transport protein got1 homolog (golt1).